Here is a 900-residue protein sequence, read N- to C-terminus: Nonribosomal peptide synthetase AMT10 (900 aa).

An adenylation region spans residues 284-686 (KQAQQNPAAM…ARRNGYIKLR (403 aa)). Residues 824-900 (ELQSDMERYL…QMARNCSLLD (77 aa)) enclose the Carrier domain. An O-(pantetheine 4'-phosphoryl)serine modification is found at serine 861.

Belongs to the NRP synthetase family.

The protein operates within mycotoxin biosynthesis. In terms of biological role, nonribosomal peptide synthetase; part of the gene clusters that mediate the biosynthesis of AM-toxins, host-selective toxins (HSTs) causing Alternaria blotch on apple, a worldwide distributed disease. AM-toxins are cyclic depsipeptides containing the 3 residues 2-hydroxy-isovaleric acid (2-HIV), dehydroalanine, L-alanine which are common for all 3 AM-toxins I to III. The fourth precursor is L-alpha-amino-methoxyphenyl-valeric acid (L-Amv) for AM-toxin I, L-alpha-amino-phenyl-valeric acid (L-Apv) for AM-toxin II, and L-alpha-amino-hydroxyphenyl-valeric acid (L-Ahv) for AM-toxin III. AM-toxins have two target sites for affecting susceptible apple cells; they cause invagination of the plasma membrane and electrolyte loss and chloroplast disorganization. The non-ribosomal peptide synthetase AMT1 contains 4 catalytic modules and is responsible for activation of each residue in AM-toxin. The aldo-keto reductase AMT2 catalyzes the conversion of 2-keto-isovaleric acid (2-KIV) to 2-hydroxy-isovaleric acid (2-HIV), one of the precursor residues incorporated by AMT1 during AM-toxin biosynthesis, by reduction of its ketone to an alcohol. The cytochrome P450 monooxygenase AMT3 and the thioesterase AMT4 are also important for AM-toxin production, but their exact function within the AM-toxin biosynthesis are not known yet. Up to 21 proteins (including AMT1 to AMT4) are predicted to be involved in AM-toxin biosynthesis since their expression ishighly up-regulated in AM-toxin-producing cultures. The chain is Nonribosomal peptide synthetase AMT10 from Alternaria alternata (Alternaria rot fungus).